The sequence spans 514 residues: ATP synthase subunit alpha (514 aa).

Residue 170–177 coordinates ATP; the sequence is GDRQTGKT.

The protein belongs to the ATPase alpha/beta chains family. As to quaternary structure, F-type ATPases have 2 components, CF(1) - the catalytic core - and CF(0) - the membrane proton channel. CF(1) has five subunits: alpha(3), beta(3), gamma(1), delta(1), epsilon(1). CF(0) has three main subunits: a(1), b(2) and c(9-12). The alpha and beta chains form an alternating ring which encloses part of the gamma chain. CF(1) is attached to CF(0) by a central stalk formed by the gamma and epsilon chains, while a peripheral stalk is formed by the delta and b chains.

It localises to the cell inner membrane. The enzyme catalyses ATP + H2O + 4 H(+)(in) = ADP + phosphate + 5 H(+)(out). Produces ATP from ADP in the presence of a proton gradient across the membrane. The alpha chain is a regulatory subunit. This Psychrobacter arcticus (strain DSM 17307 / VKM B-2377 / 273-4) protein is ATP synthase subunit alpha.